A 653-amino-acid polypeptide reads, in one-letter code: Brain-enriched guanylate kinase-associated protein (653 aa).

At Y186 the chain carries Phosphotyrosine. Positions 241-271 (PGSLSSHLSEASAQDLGFPEGLEKPGSRPPY) are disordered. Residues 243–252 (SLSSHLSEAS) are compositionally biased toward polar residues. Phosphoserine is present on residues S249, S278, S295, and S314. Positions 288–329 (RHQDRRPSVEGPGSDVGFLQAQNSTDSTAEEEEEEEEDTEAG) are disordered. Residues 315–327 (TAEEEEEEEEDTE) are compositionally biased toward acidic residues. S400 and S427 each carry phosphoserine. R435 carries the asymmetric dimethylarginine modification. Residues S523, S533, S535, S558, S560, S564, S613, and S623 each carry the phosphoserine modification. The segment at 587–653 (GASGSPEPEL…KAQLYGTLLN (67 aa)) is disordered.

In terms of assembly, interacts with DLG4 and DLGAP1 and forms a ternary complex.

The protein localises to the cytoplasm. Its subcellular location is the membrane. May sustain the structure of the postsynaptic density (PSD). This Ovis aries (Sheep) protein is Brain-enriched guanylate kinase-associated protein (BEGAIN).